We begin with the raw amino-acid sequence, 489 residues long: Squalene monooxygenase (489 aa).

A helical transmembrane segment spans residues 10-30; it reads VTYDALIVGAGVIGPCVATAL. Residues 21 to 22, 41 to 42, R49, R151, V167, D328, and M341 each bind FAD; these read VI and ER. The next 2 membrane-spanning stretches (helical) occupy residues 426–446 and 464–484; these read FLAG…AVAF and ALLE…PFLV.

This sequence belongs to the squalene monooxygenase family. FAD serves as cofactor.

It is found in the microsome membrane. The protein resides in the endoplasmic reticulum membrane. The catalysed reaction is squalene + reduced [NADPH--hemoprotein reductase] + O2 = (S)-2,3-epoxysqualene + oxidized [NADPH--hemoprotein reductase] + H2O + H(+). Its pathway is terpene metabolism; lanosterol biosynthesis; lanosterol from farnesyl diphosphate: step 2/3. In terms of biological role, catalyzes the stereospecific oxidation of squalene to (S)-2,3-epoxysqualene, and is considered to be a rate-limiting enzyme in steroid biosynthesis. The polypeptide is Squalene monooxygenase (ERG1) (Candida glabrata (strain ATCC 2001 / BCRC 20586 / JCM 3761 / NBRC 0622 / NRRL Y-65 / CBS 138) (Yeast)).